A 591-amino-acid polypeptide reads, in one-letter code: Coiled-coil domain-containing protein 148 (591 aa).

Coiled coils occupy residues 166 to 195 (VKKQ…SIKI), 352 to 417 (MLAK…KKKK), and 466 to 498 (ERRL…KQVA).

The protein is Coiled-coil domain-containing protein 148 (CCDC148) of Homo sapiens (Human).